Here is a 132-residue protein sequence, read N- to C-terminus: MSMQDTVADMLTRIRNAQMARKVSVAMPSSKLRKSIADLLVQEGYIASAEVTDEGNGKATLSIELKYFEGKPVIEVIKRYSRPGLRQYRGKDAIPSVQQGLGVAIVSTSKGIMSDRAARAAGIGGEIIAFVA.

This sequence belongs to the universal ribosomal protein uS8 family. Part of the 30S ribosomal subunit. Contacts proteins S5 and S12.

In terms of biological role, one of the primary rRNA binding proteins, it binds directly to 16S rRNA central domain where it helps coordinate assembly of the platform of the 30S subunit. In Psychrobacter sp. (strain PRwf-1), this protein is Small ribosomal subunit protein uS8.